The following is a 483-amino-acid chain: NADPH:adrenodoxin oxidoreductase, mitochondrial (483 aa).

The transit peptide at methionine 1 to phenylalanine 14 directs the protein to the mitochondrion. Residues alanine 32, aspartate 53, leucine 61, and leucine 97 each contribute to the FAD site. NADP(+) is bound by residues glutamine 169–valine 172, arginine 213–arginine 214, and glutamate 225. FAD contacts are provided by residues tryptophan 391 and glycine 398–isoleucine 400. An NADP(+)-binding site is contributed by glycine 398.

The protein belongs to the ferredoxin--NADP reductase type 1 family. FAD is required as a cofactor.

It localises to the mitochondrion. It catalyses the reaction 2 reduced [adrenodoxin] + NADP(+) + H(+) = 2 oxidized [adrenodoxin] + NADPH. Associates in vitro with the adrenodoxin-like protein MFDX1 to form an efficient low potential electron transfer chain that is able to reduce cytochrome C. Functions as accessory mitochondrial protein involved with BIO2 in the plant biotin synthase reaction. The protein is NADPH:adrenodoxin oxidoreductase, mitochondrial of Arabidopsis thaliana (Mouse-ear cress).